Consider the following 420-residue polypeptide: Meiotically up-regulated gene 137 protein (420 aa).

A BAR domain is found at 10 to 232 (NEKPLGDQRA…QNSLTPQKKI (223 aa)). An SH3 domain is found at 279–345 (KETVFVKAIY…PVNYCTRIYD (67 aa)). Residues 398–420 (SQNVEASSQPIKIRKPLPEIPNK) are disordered.

Its subcellular location is the cytoplasm. The protein localises to the nucleus. Its function is as follows. Has a role in meiosis and sporulation. In Schizosaccharomyces pombe (strain 972 / ATCC 24843) (Fission yeast), this protein is Meiotically up-regulated gene 137 protein (mug137).